Consider the following 862-residue polypeptide: MSQNEHCQDSGEYFSAGTQGYFKNNMEDNLEVREDSLGDEVFDTVNSSIVSGESIRFFVNVNLEVQPSKSDLEAATGGCVLLHTSRKYLKLKNFEEEVRAHRDLDGFLAQASIILNETATSLDDVLRTMLNRFALDPNHAEPDCDLDLLMAKLFTDAGAPMESKVHLLSDTIQGVTATVRGVQYEQSWLCIICTMKTLQKRHVCISRLVRPQNWGENSCEVRFVILVLAPPKMKSTKTAMEVARTFATMFSDITFRQKLLKTRTEEEFKEALVHQRQLLTMMMPRAAGHSMSSLHTHRHPQPPKCKDFFPFGKGIWMDIMRRFPVYPMDFTDGIIGKSKSVGKYVTTTLFLYFACLLPTIAFGSLNDENTNGAIDVQKTIAGQSIGGLLYALFSGQPLVILLTTAPLAIYTQVIRVICDDYNLDFNAFYAWTGLWNSFFLALYAFLNLSLLMNLFKRSTEEIIALFISITFVLDAVKGMVKIFGKYYYGHHYHTKRTSSLVSLLGIGRSPNSSLHTALNASLLASPVEMATTSSPGSTHSGQATAVLSLLIMLGTLWLGYTLYQFKKSPYLHPCVRETLSDCALPIAVLSFSLIGSYGFQEIEMSKFRYNPSESLFEVAQIHSLSFKAIGSAMGLGFLLSLLFFIEQNLVAALVNAPENRLVKGTAYHWDLLLLAIINTGLSLFGLPWIHAAYPHSPLHVRALALVEERVENGHIYETIVDVKETRLTALGASVLVGLSLLLLPFPLQWIPKPVLYGLFLYIALTSLDGNQLFSRVALLLKEQTSYPPTHYIRRVPQRKIHYFTGLQILQLLLLCAFGMSSLPYMKMVFPLIMIAMIPIRYNLLPRIIEAKYLDVMDAEHRP.

The Cytoplasmic segment spans residues 1–343; that stretch reads MSQNEHCQDS…IIGKSKSVGK (343 aa). The helical transmembrane segment at 344-366 threads the bilayer; the sequence is YVTTTLFLYFACLLPTIAFGSLN. The Extracellular portion of the chain corresponds to 367 to 379; the sequence is DENTNGAIDVQKT. Residues 380 to 393 traverse the membrane as a helical segment; that stretch reads IAGQSIGGLLYALF. The Cytoplasmic portion of the chain corresponds to 394 to 398; the sequence is SGQPL. A helical membrane pass occupies residues 399–415; it reads VILLTTAPLAIYTQVIR. At 416-428 the chain is on the extracellular side; it reads VICDDYNLDFNAF. Residues 429–452 form a helical membrane-spanning segment; sequence YAWTGLWNSFFLALYAFLNLSLLM. The Cytoplasmic portion of the chain corresponds to 453–460; the sequence is NLFKRSTE. Residues 461–481 traverse the membrane as a helical segment; sequence EIIALFISITFVLDAVKGMVK. At 482-542 the chain is on the extracellular side; sequence IFGKYYYGHH…SSPGSTHSGQ (61 aa). 2 N-linked (GlcNAc...) asparagine glycosylation sites follow: asparagine 511 and asparagine 519. The helical transmembrane segment at 543–564 threads the bilayer; sequence ATAVLSLLIMLGTLWLGYTLYQ. The Cytoplasmic portion of the chain corresponds to 565-577; the sequence is FKKSPYLHPCVRE. Residues 578–599 form a helical membrane-spanning segment; sequence TLSDCALPIAVLSFSLIGSYGF. Over 600–627 the chain is Extracellular; it reads QEIEMSKFRYNPSESLFEVAQIHSLSFK. A helical membrane pass occupies residues 628-645; it reads AIGSAMGLGFLLSLLFFI. The Cytoplasmic segment spans residues 646-670; that stretch reads EQNLVAALVNAPENRLVKGTAYHWD. Residues 671–691 form a helical membrane-spanning segment; the sequence is LLLLAIINTGLSLFGLPWIHA. Residues 692–721 are Extracellular-facing; the sequence is AYPHSPLHVRALALVEERVENGHIYETIVD. Residues 722–746 traverse the membrane as a helical segment; it reads VKETRLTALGASVLVGLSLLLLPFP. Residues 747–752 lie on the Cytoplasmic side of the membrane; the sequence is LQWIPK. Residues 753-770 form a helical membrane-spanning segment; that stretch reads PVLYGLFLYIALTSLDGN. Residues 771–774 are Extracellular-facing; it reads QLFS. A helical transmembrane segment spans residues 775 to 797; the sequence is RVALLLKEQTSYPPTHYIRRVPQ. At 798 to 802 the chain is on the cytoplasmic side; sequence RKIHY. Residues 803 to 819 form a helical membrane-spanning segment; it reads FTGLQILQLLLLCAFGM. The Extracellular portion of the chain corresponds to 820–823; it reads SSLP. Residues 824-844 traverse the membrane as a helical segment; it reads YMKMVFPLIMIAMIPIRYNLL. Topologically, residues 845-862 are cytoplasmic; that stretch reads PRIIEAKYLDVMDAEHRP.

This sequence belongs to the anion exchanger (TC 2.A.31) family. In terms of assembly, homodimer. Post-translationally, glycosylated. As to expression, expressed in the endothelial cells of the cornea. In the inner ear, is located in fibrocytes underlying the stria vascularis. In the kidney, is expressed in the thin descending limb of Henle loop.

The protein resides in the cell membrane. The protein localises to the basolateral cell membrane. It carries out the reaction tetrahydroxoborate(in) + 2 Na(+)(in) = tetrahydroxoborate(out) + 2 Na(+)(out). Functionally, multifunctional transporter with an impact in cell morphology and differentiation. In the presence of borate B(OH)4(-), acts as a voltage-dependent electrogenic Na(+)-coupled B(OH)4(-) cotransporter controlling boron homeostasis. At early stages of stem cell differentiation, participates in synergy with ITGA5-ITGB1 and ITGAV-ITGB3 integrins and BMPR1A to promote cell adhesion and contractility that drives differentiation toward osteogenic commitment while inhibiting adipogenesis. In the absence of B(OH)4(-), acts as a Na(+)-coupled OH(-) or H(+) permeable channel with implications in cellular redox balance. Regulates the oxidative stress response in corneal endothelium by enhancing antioxidant defenses and protecting cells from reactive oxygen species. In response to hypo-osmotic challenge, also acts as water permeable channel at the basolateral cell membrane of corneal endothelial cells and facilitates transendothelial fluid reabsorption in the aqueous humor. In the presence of ammonia, acts as an electrogenic NH3/H(+) cotransporter and may play a role in ammonia transport and reabsorption in renal Henle's loop epithelium. The sequence is that of Solute carrier family 4 member 11 (Slc4a11) from Mus musculus (Mouse).